We begin with the raw amino-acid sequence, 79 residues long: D-alanyl carrier protein (79 aa).

The 77-residue stretch at 1–77 (MDIKSEVIEI…KIIAGIVELQ (77 aa)) folds into the Carrier domain. The residue at position 35 (S35) is an O-(pantetheine 4'-phosphoryl)serine.

It belongs to the DltC family. Post-translationally, 4'-phosphopantetheine is transferred from CoA to a specific serine of apo-DCP.

The protein localises to the cytoplasm. It functions in the pathway cell wall biogenesis; lipoteichoic acid biosynthesis. Carrier protein involved in the D-alanylation of lipoteichoic acid (LTA). The loading of thioester-linked D-alanine onto DltC is catalyzed by D-alanine--D-alanyl carrier protein ligase DltA. The DltC-carried D-alanyl group is further transferred to cell membrane phosphatidylglycerol (PG) by forming an ester bond, probably catalyzed by DltD. D-alanylation of LTA plays an important role in modulating the properties of the cell wall in Gram-positive bacteria, influencing the net charge of the cell wall. This Streptococcus pneumoniae serotype 2 (strain D39 / NCTC 7466) protein is D-alanyl carrier protein.